The chain runs to 93 residues: Large ribosomal subunit protein uL23cz/uL23cy (93 aa).

This sequence belongs to the universal ribosomal protein uL23 family. Part of the 50S ribosomal subunit.

It is found in the plastid. The protein resides in the chloroplast. Binds to 23S rRNA. The sequence is that of Large ribosomal subunit protein uL23cz/uL23cy (rpl23-A) from Panax ginseng (Korean ginseng).